We begin with the raw amino-acid sequence, 269 residues long: Interleukin-1 beta (269 aa).

Residues 1–117 (MATVPELNCE…DDDDNLLVCD (117 aa)) constitute a propeptide that is removed on maturation.

This sequence belongs to the IL-1 family. Monomer. Interacts with MEFV. Interacts with integrins ITGAV:ITGBV and ITGA5:ITGB1; integrin-binding is required for IL1B signaling. Interacts with cargo receptor TMED10; the interaction is direct and is required for the secretion of IL1B mature form. Interacts with HSP90AB1; the interaction facilitates cargo translocation into the ERGIC. Interacts with HSP90B1; the interaction facilitates cargo translocation into the ERGIC. Expressed in activated macrophages (at protein level).

It is found in the cytoplasm. Its subcellular location is the cytosol. It localises to the secreted. The protein localises to the lysosome. The protein resides in the extracellular exosome. Functionally, potent pro-inflammatory cytokine. Initially discovered as the major endogenous pyrogen, induces prostaglandin synthesis, neutrophil influx and activation, T-cell activation and cytokine production, B-cell activation and antibody production, and fibroblast proliferation and collagen production. Promotes Th17 differentiation of T-cells. Synergizes with IL12/interleukin-12 to induce IFNG synthesis from T-helper 1 (Th1) cells. Plays a role in angiogenesis by inducing VEGF production synergistically with TNF and IL6. Involved in transduction of inflammation downstream of pyroptosis: its mature form is specifically released in the extracellular milieu by passing through the gasdermin-D (GSDMD) pore. This chain is Interleukin-1 beta (Il1b), found in Mus musculus (Mouse).